A 352-amino-acid chain; its full sequence is Uroporphyrinogen decarboxylase (352 aa).

Residues 27–31 (RQAGR), aspartate 77, tyrosine 154, threonine 209, and histidine 325 contribute to the substrate site.

The protein belongs to the uroporphyrinogen decarboxylase family. Homodimer.

The protein resides in the cytoplasm. It carries out the reaction uroporphyrinogen III + 4 H(+) = coproporphyrinogen III + 4 CO2. It functions in the pathway porphyrin-containing compound metabolism; protoporphyrin-IX biosynthesis; coproporphyrinogen-III from 5-aminolevulinate: step 4/4. Functionally, catalyzes the decarboxylation of four acetate groups of uroporphyrinogen-III to yield coproporphyrinogen-III. This chain is Uroporphyrinogen decarboxylase, found in Legionella pneumophila (strain Paris).